A 118-amino-acid chain; its full sequence is Holin-like protein CidA 2 (118 aa).

Transmembrane regions (helical) follow at residues 5-27 (MLLL…QGVF), 31-50 (MPGS…TRIL), 62-84 (LLVF…ESFL), and 88-110 (GSII…GYIS).

It belongs to the CidA/LrgA family. CidA subfamily.

The protein localises to the cell membrane. Its function is as follows. Increases the activity of extracellular murein hydrolases possibly by mediating their export via hole formation. Inhibited by the antiholin-like proteins LrgAB. In an unstressed cell, the LrgAB products probably inhibit the function of the CidA protein. When a cell is stressed by the addition of antibiotics or by other factors in the environment, CidA possibly oligomerizes within the bacterial cell membrane, creating lesions that disrupt the proton motive force, which in turn results in loss of cell viability. These lesions are also hypothesized to regulate the subsequent cell lysis by either allowing the murein hydrolases access to the cell wall substrate and/or regulating their activity by a possible change in the cell wall pH that results from loss of membrane potential. The polypeptide is Holin-like protein CidA 2 (cidA2) (Bacillus anthracis).